Here is an 84-residue protein sequence, read N- to C-terminus: Small ribosomal subunit protein bS16 (84 aa).

The protein belongs to the bacterial ribosomal protein bS16 family.

The polypeptide is Small ribosomal subunit protein bS16 (Koribacter versatilis (strain Ellin345)).